Here is a 142-residue protein sequence, read N- to C-terminus: Peptide methionine sulfoxide reductase MsrB (142 aa).

Residues 2–125 form the MsrB domain; sequence LKKDKSELTD…NSAAIQFIPY (124 aa). Residue cysteine 114 is the Nucleophile of the active site.

Belongs to the MsrB Met sulfoxide reductase family.

The enzyme catalyses L-methionyl-[protein] + [thioredoxin]-disulfide + H2O = L-methionyl-(R)-S-oxide-[protein] + [thioredoxin]-dithiol. The sequence is that of Peptide methionine sulfoxide reductase MsrB from Staphylococcus aureus (strain USA300).